The sequence spans 293 residues: Protease HtpX (293 aa).

The next 2 membrane-spanning stretches (helical) occupy residues I4–L24 and G34–S54. H139 is a binding site for Zn(2+). Residue E140 is part of the active site. H143 provides a ligand contact to Zn(2+). A run of 2 helical transmembrane segments spans residues V158–M178 and L193–I213. E222 serves as a coordination point for Zn(2+).

It belongs to the peptidase M48B family. The cofactor is Zn(2+).

The protein resides in the cell inner membrane. The sequence is that of Protease HtpX from Escherichia fergusonii (strain ATCC 35469 / DSM 13698 / CCUG 18766 / IAM 14443 / JCM 21226 / LMG 7866 / NBRC 102419 / NCTC 12128 / CDC 0568-73).